Consider the following 494-residue polypeptide: GlcNAc-binding protein A (494 aa).

The first 21 residues, M1–A21, serve as a signal peptide directing secretion. The Chitin-binding type-4 domain maps to H22–F192. The Chitin-binding type-3 domain maps to A435–W484. Positions V474–C494 are disordered.

This sequence belongs to the GbpA family.

The protein resides in the secreted. Its function is as follows. Probably interacts with GlcNAc residues. May promote attachment to both epithelial cell surfaces and chitin. This Yersinia enterocolitica serotype O:8 / biotype 1B (strain NCTC 13174 / 8081) protein is GlcNAc-binding protein A.